A 156-amino-acid chain; its full sequence is Endoribonuclease YbeY (156 aa).

Residues H122, H126, and H132 each coordinate Zn(2+).

Belongs to the endoribonuclease YbeY family. It depends on Zn(2+) as a cofactor.

It localises to the cytoplasm. Single strand-specific metallo-endoribonuclease involved in late-stage 70S ribosome quality control and in maturation of the 3' terminus of the 16S rRNA. The sequence is that of Endoribonuclease YbeY from Geobacillus kaustophilus (strain HTA426).